The sequence spans 383 residues: 8-amino-7-oxononanoate synthase (383 aa).

Substrate contacts are provided by R27 and R34. 114–115 (GY) serves as a coordination point for pyridoxal 5'-phosphate. A substrate-binding site is contributed by H139. Pyridoxal 5'-phosphate contacts are provided by residues S187, 212–215 (DDAH), and 232–235 (TLSK). K235 is modified (N6-(pyridoxal phosphate)lysine). T344 serves as a coordination point for substrate.

This sequence belongs to the class-II pyridoxal-phosphate-dependent aminotransferase family. BioF subfamily. Homodimer. The cofactor is pyridoxal 5'-phosphate.

The enzyme catalyses 6-carboxyhexanoyl-[ACP] + L-alanine + H(+) = (8S)-8-amino-7-oxononanoate + holo-[ACP] + CO2. It functions in the pathway cofactor biosynthesis; biotin biosynthesis. Functionally, catalyzes the decarboxylative condensation of pimeloyl-[acyl-carrier protein] and L-alanine to produce 8-amino-7-oxononanoate (AON), [acyl-carrier protein], and carbon dioxide. This chain is 8-amino-7-oxononanoate synthase, found in Methylorubrum extorquens (strain PA1) (Methylobacterium extorquens).